The following is a 130-amino-acid chain: Large ribosomal subunit protein uL14 (130 aa).

Belongs to the universal ribosomal protein uL14 family. In terms of assembly, part of the 50S ribosomal subunit. Forms a cluster with proteins L3 and L19. In the 70S ribosome, L14 and L19 interact and together make contacts with the 16S rRNA in bridges B5 and B8.

In terms of biological role, binds to 23S rRNA. Forms part of two intersubunit bridges in the 70S ribosome. The chain is Large ribosomal subunit protein uL14 from Leptospira interrogans serogroup Icterohaemorrhagiae serovar copenhageni (strain Fiocruz L1-130).